We begin with the raw amino-acid sequence, 346 residues long: UPF0718 protein YraQ (346 aa).

9 helical membrane-spanning segments follow: residues 12-32 (PIQWWKPALFFLVVIAGLWYV), 71-91 (MIYFLAVWKAAVLGVILGSLI), 113-133 (LLGTLFSLPGMMCTCCAAPVA), 146-166 (ALAFWMGNPVLNPATLVFMGF), 167-187 (VLGWGFAAIRLVAGLVMVLLI), 223-243 (ALWTLFWSTIPVYILAVLVLG), 260-280 (SLMWVVAMAVAGCLFVIPTAA), 296-316 (APALALLMTLPAVSLPSLIML), and 326-346 (WLTGAMVAVSGVIVGGLALLF).

It belongs to the UPF0718 family.

The protein resides in the cell membrane. The polypeptide is UPF0718 protein YraQ (yraQ) (Escherichia coli (strain K12)).